Here is a 336-residue protein sequence, read N- to C-terminus: Protein DIA1 (336 aa).

The protein localises to the cytoplasm. In terms of biological role, involved in regulation of invasive growth. In Saccharomyces cerevisiae (strain ATCC 204508 / S288c) (Baker's yeast), this protein is Protein DIA1 (DIA1).